A 419-amino-acid polypeptide reads, in one-letter code: MDKFRVQGPTKLQGEVTISGAKNAALPILFAALLAEEPVEIQNVPKLKDVDTSMKLLSQLGAKVERNGSVHIDARDVNVFCAPYDLVKTMRASIWALGPLVARFGQGQVSLPGGCTIGARPVDLHISGLEQLGATIKLEEGYVKASVDGRLKGAHIVMDKVSVGATVTIMCAATLAEGTTIIENAAREPEIVDTANFLITLGAKISGQGTDRIVIEGVERLGGGVYRVLPDRIETGTFLVAAAISRGKIICRNAQPDTLDAVLAKLRDAGADIEVGEDWISLDMHGKRPKAVNVRTAPHPAFPTDMQAQFTLLNLVAEGTGFITETVFENRFMHVPELSRMGAHAEIESNTVICHGVEKLSGAQVMATDLRASASLVLAGCIAEGTTVVDRIYHIDRGYERIEDKLRALGANIKRVKGE.

Residue 22 to 23 coordinates phosphoenolpyruvate; the sequence is KN. Residue Arg91 coordinates UDP-N-acetyl-alpha-D-glucosamine. Catalysis depends on Cys115, which acts as the Proton donor. Position 115 is a 2-(S-cysteinyl)pyruvic acid O-phosphothioketal (Cys115). UDP-N-acetyl-alpha-D-glucosamine contacts are provided by residues 120-124, 160-163, Asp305, and Val327; these read RPVDL and KVSV.

The protein belongs to the EPSP synthase family. MurA subfamily.

Its subcellular location is the cytoplasm. It carries out the reaction phosphoenolpyruvate + UDP-N-acetyl-alpha-D-glucosamine = UDP-N-acetyl-3-O-(1-carboxyvinyl)-alpha-D-glucosamine + phosphate. The protein operates within cell wall biogenesis; peptidoglycan biosynthesis. In terms of biological role, cell wall formation. Adds enolpyruvyl to UDP-N-acetylglucosamine. This chain is UDP-N-acetylglucosamine 1-carboxyvinyltransferase, found in Shigella boydii serotype 18 (strain CDC 3083-94 / BS512).